A 299-amino-acid chain; its full sequence is Taste receptor type 2 member 19 (299 aa).

Met1 is a topological domain (extracellular). The chain crosses the membrane as a helical span at residues 2–22; that stretch reads MCFLLIISSILVVFAFVLGNV. At 23-55 the chain is on the cytoplasmic side; sequence ANGFIALVNVIDWVNTRKISSAEQILTALVVSR. Residues 56–76 form a helical membrane-spanning segment; the sequence is IGLLWVMLFLWYATVFNSALY. The Extracellular segment spans residues 77–87; that stretch reads GLEVRIVASNA. The chain crosses the membrane as a helical span at residues 88 to 108; it reads WAVTNHFSMWLAASLSIFCLL. Topologically, residues 109–127 are cytoplasmic; that stretch reads KIANFSNLISLHLKKRIKS. Residues 128 to 148 traverse the membrane as a helical segment; it reads VVLVILLGPLVFLICNLAVIT. The Extracellular portion of the chain corresponds to 149 to 181; it reads MDERVWTKEYEGNVTWKIKLRNAIHLSSLTVTT. N-linked (GlcNAc...) asparagine glycosylation is present at Asn161. Residues 182–202 form a helical membrane-spanning segment; the sequence is LANLIPFTLSLICFLLLICSL. The Cytoplasmic portion of the chain corresponds to 203-226; sequence CKHLKKMRLHSKGSQDPSTKVHIK. Residues 227–247 traverse the membrane as a helical segment; it reads ALQTVTSFLMLFAIYFLCIIT. At 248–259 the chain is on the extracellular side; that stretch reads STWNLRTQQSKL. Residues 260-280 traverse the membrane as a helical segment; sequence VLLLCQTVAIMYPSFHSFILI. The Cytoplasmic segment spans residues 281 to 299; sequence MGSRKLKQTFLSVLWQMTR.

It belongs to the G-protein coupled receptor T2R family. In terms of tissue distribution, expressed in subsets of taste receptor cells of the tongue and exclusively in gustducin-positive cells.

The protein resides in the membrane. Its function is as follows. Receptor that may play a role in the perception of bitterness and is gustducin-linked. May play a role in sensing the chemical composition of the gastrointestinal content. The activity of this receptor may stimulate alpha gustducin, mediate PLC-beta-2 activation and lead to the gating of TRPM5. The polypeptide is Taste receptor type 2 member 19 (TAS2R19) (Homo sapiens (Human)).